A 699-amino-acid chain; its full sequence is MARKTPIERYRNIGIMAHIDAGKTTATERILFYTGISHKIGETHEGAAVMDWMSQEQERGITITSAATTAFWQGMDQQYPQHRINIIDTPGHVDFTIEVERSLRVLDGAIAVFCAVGGVEPQSETVWRQATKYEVPRMAFVNKMDRAGANFGRVVEQIRTRLKATPVPLQLPIGAEDEFKGVVDLVRMKAIYWNEEDMGVTYEQTDVPAELADEAAEAREFLVEAAAEADEELMDKYLEGGELTVEEINRGLRARTLANEIVPAFCGSAFKNKGVQALLDGVIEYLPSPVDVPAIEGELDDADGTVATRKPGDDQPFAALAFKIATDPYVGTLTFFRVYSGVVQTGDTVFNPVKGKKERLGRIVQMHANSREEIKEVRAGDIAAAVGLKDVTTGDTLCDINNKITLERMEFPDPVISVAVEPKTKGDQEKMGMALGKLAQEDPSFQVRTDEESGQTIISGMGELHLDIIVDRLKREFKVEANVGAPQVAYRETIRKTVEQEGKFVRQSGGRGQYGHVHLRISPQERNAGYEFVNSIVGGVVPKEYIPSVDKGAYEALENGILAGFPAIDVKVELYDGSYHDVDSSEAAFKIAGSMAMKEGFMKADPVLLEPIMRVEVVTPEEYMGDVMGDLNRRRGTVQGMEDGPSGKIIRAQVPLKEMFGYATDLRSATQGRASYVMFFDEYQEAPASIADEIIKKAS.

Positions 8–290 (ERYRNIGIMA…GVIEYLPSPV (283 aa)) constitute a tr-type G domain. GTP is bound by residues 17-24 (AHIDAGKT), 88-92 (DTPGH), and 142-145 (NKMD).

It belongs to the TRAFAC class translation factor GTPase superfamily. Classic translation factor GTPase family. EF-G/EF-2 subfamily.

Its subcellular location is the cytoplasm. Functionally, catalyzes the GTP-dependent ribosomal translocation step during translation elongation. During this step, the ribosome changes from the pre-translocational (PRE) to the post-translocational (POST) state as the newly formed A-site-bound peptidyl-tRNA and P-site-bound deacylated tRNA move to the P and E sites, respectively. Catalyzes the coordinated movement of the two tRNA molecules, the mRNA and conformational changes in the ribosome. In Alkalilimnicola ehrlichii (strain ATCC BAA-1101 / DSM 17681 / MLHE-1), this protein is Elongation factor G.